The following is a 443-amino-acid chain: MKVLQEINLTYSILVIADFSSIFGCLLVLIAFKKLKLLRNHITRVIACFCVSSLLKDIISTGLTLSLGPQNEAGSTSFQCYLYAITITYGSLACWLWTLCLAFSIYNLIVKREPEPEKYEKFYHGVCWTIPLICVIVMLAKKTIEPVGNWCWISEKYVGYRFGLFYGPFFAIWIISAVLVGLTSRYTYSVIRNSVSDNKDKHMTYQFKLINYIIVFLLCWVFAIVNRILNGLGYYPTLPNILHTYFSVSHGFFASVTFIYNNPLMWRYWGSKIFLIFAKFGYFVELQRRLDRNKNNNNPSPILNSYAATVYHSSTIESLSLQHNNDISNDNQQQQQQQQTPQQPQQQFQQQQSPTVIEMQNLKQDQNIENNEQNENCYNTIDTNIEINTNKLNDNSFEITQPSNDLNTIENNNNYNNNNNNNNNNSLVIEKEKDEREKKDNKF.

Over 1-11 (MKVLQEINLTY) the chain is Extracellular. N-linked (GlcNAc...) asparagine glycosylation occurs at Asn8. The helical transmembrane segment at 12 to 32 (SILVIADFSSIFGCLLVLIAF) threads the bilayer. The Cytoplasmic segment spans residues 33–44 (KKLKLLRNHITR). The chain crosses the membrane as a helical span at residues 45–65 (VIACFCVSSLLKDIISTGLTL). Residues 66-89 (SLGPQNEAGSTSFQCYLYAITITY) lie on the Extracellular side of the membrane. Residues 90–110 (GSLACWLWTLCLAFSIYNLIV) form a helical membrane-spanning segment. The Cytoplasmic portion of the chain corresponds to 111 to 119 (KREPEPEKY). Residues 120-140 (EKFYHGVCWTIPLICVIVMLA) form a helical membrane-spanning segment. Topologically, residues 141–161 (KKTIEPVGNWCWISEKYVGYR) are extracellular. A helical membrane pass occupies residues 162–182 (FGLFYGPFFAIWIISAVLVGL). The Cytoplasmic segment spans residues 183-208 (TSRYTYSVIRNSVSDNKDKHMTYQFK). Residues 209–229 (LINYIIVFLLCWVFAIVNRIL) traverse the membrane as a helical segment. Topologically, residues 230-263 (NGLGYYPTLPNILHTYFSVSHGFFASVTFIYNNP) are extracellular. The helical transmembrane segment at 264-284 (LMWRYWGSKIFLIFAKFGYFV) threads the bilayer. The Cytoplasmic segment spans residues 285–443 (ELQRRLDRNK…DEREKKDNKF (159 aa)). Disordered regions lie at residues 325–354 (NDIS…QQSP) and 396–443 (SFEI…DNKF). A compositionally biased stretch (low complexity) spans 332–352 (QQQQQQQQTPQQPQQQFQQQQ). Residues 396–410 (SFEITQPSNDLNTIE) are compositionally biased toward polar residues. The segment covering 411-425 (NNNNYNNNNNNNNNN) has biased composition (low complexity). Residues 429–443 (IEKEKDEREKKDNKF) are compositionally biased toward basic and acidic residues.

Belongs to the G-protein coupled receptor 5 family. Post-translationally, C-terminal Ser or Thr residues may be phosphorylated.

It localises to the membrane. Receptor for cAMP. Regulates axial patterning and cellular differentiation during late development. The activity of this receptor is mediated by G proteins. The sequence is that of Cyclic AMP receptor 4 (carD) from Dictyostelium discoideum (Social amoeba).